Consider the following 295-residue polypeptide: THO complex subunit 4C (295 aa).

The segment at 1 to 67 is disordered; it reads MSDALNMTLD…GPLAVNTRPS (67 aa). S2 is subject to N-acetylserine. The segment covering 11 to 22 has biased composition (basic and acidic residues); sequence EIVKKSKSERSA. Positions 38–55 are enriched in gly residues; sequence GRGGPNGVVGGGRGGGPV. In terms of domain architecture, RRM spans 107-184; sequence TTVYITNLDQ…RPMKLEILGG (78 aa). Positions 212-295 are disordered; the sequence is QGVRGGRVGR…SYHAEAMNIS (84 aa). Gly residues-rich tracts occupy residues 213 to 227 and 242 to 267; these read GVRG…GSGP and VTAG…SGGR. Over residues 271 to 288 the composition is skewed to basic and acidic residues; it reads KPVEKSAADLDKDLESYH.

It belongs to the ALYREF family. As to quaternary structure, interacts with PARP1.

The protein localises to the nucleus. The protein resides in the nucleoplasm. It is found in the nucleolus. Export adapter involved in nuclear export of spliced and unspliced mRNA. This chain is THO complex subunit 4C, found in Arabidopsis thaliana (Mouse-ear cress).